We begin with the raw amino-acid sequence, 415 residues long: Gamma-glutamyl phosphate reductase (415 aa).

Belongs to the gamma-glutamyl phosphate reductase family.

Its subcellular location is the cytoplasm. The enzyme catalyses L-glutamate 5-semialdehyde + phosphate + NADP(+) = L-glutamyl 5-phosphate + NADPH + H(+). It functions in the pathway amino-acid biosynthesis; L-proline biosynthesis; L-glutamate 5-semialdehyde from L-glutamate: step 2/2. Functionally, catalyzes the NADPH-dependent reduction of L-glutamate 5-phosphate into L-glutamate 5-semialdehyde and phosphate. The product spontaneously undergoes cyclization to form 1-pyrroline-5-carboxylate. This chain is Gamma-glutamyl phosphate reductase, found in Mycobacterium bovis (strain BCG / Pasteur 1173P2).